Here is a 445-residue protein sequence, read N- to C-terminus: ATP-dependent protease ATPase subunit HslU (445 aa).

ATP is bound by residues isoleucine 18, glycine 60–glutamate 65, aspartate 258, glutamate 323, and arginine 395.

The protein belongs to the ClpX chaperone family. HslU subfamily. In terms of assembly, a double ring-shaped homohexamer of HslV is capped on each side by a ring-shaped HslU homohexamer. The assembly of the HslU/HslV complex is dependent on binding of ATP.

The protein localises to the cytoplasm. Functionally, ATPase subunit of a proteasome-like degradation complex; this subunit has chaperone activity. The binding of ATP and its subsequent hydrolysis by HslU are essential for unfolding of protein substrates subsequently hydrolyzed by HslV. HslU recognizes the N-terminal part of its protein substrates and unfolds these before they are guided to HslV for hydrolysis. This Syntrophotalea carbinolica (strain DSM 2380 / NBRC 103641 / GraBd1) (Pelobacter carbinolicus) protein is ATP-dependent protease ATPase subunit HslU.